The sequence spans 283 residues: Transcription factor bHLH104 (283 aa).

Residues 96–134 (VEINSGSSGGAVKEEQEHLDDDCSRKRARTGSCSRGGGT) are disordered. A compositionally biased stretch (basic and acidic residues) spans 107–120 (VKEEQEHLDDDCSR). The bHLH domain occupies 130-181 (RGGGTKACRERLRREKLNERFMDLSSVLEPGRTPKTDKPAILDDAIRILNQL).

In terms of assembly, homodimer. Interacts with BTS and BHLH47/PYE.

It is found in the nucleus. This Arabidopsis thaliana (Mouse-ear cress) protein is Transcription factor bHLH104 (BHLH104).